A 29-amino-acid polypeptide reads, in one-letter code: Neurotoxin BmK A3-6 (29 aa).

Contains 3 disulfide bonds. As to expression, expressed by the venom gland.

It is found in the secreted. This is Neurotoxin BmK A3-6 from Olivierus martensii (Manchurian scorpion).